Reading from the N-terminus, the 335-residue chain is Expansin-like protein 3 (335 aa).

Residues 1–20 form the signal peptide; it reads MKFNTIFLVLSIVKFILISA. At 21–314 the chain is on the extracellular side; that stretch reads QSCPFSQSII…LNENENIESN (294 aa). Residues 43–143 enclose the Expansin-like EG45 domain; the sequence is AGNCGFEKLN…VKVPCEVSGN (101 aa). 2 disulfides stabilise this stretch: C46–C76 and C79–C138. Residue N87 is glycosylated (N-linked (GlcNAc...) asparagine). The disordered stretch occupies residues 247–276; the sequence is YKPQTFNSQQTSNNQNSNTQTPTKQPSPNS. Residues 249–272 show a composition bias toward low complexity; that stretch reads PQTFNSQQTSNNQNSNTQTPTKQP. Residues 315–335 form a helical membrane-spanning segment; it reads SLKLLPNFLLLILIILLNINF.

Belongs to the expansin family. Expansin A subfamily.

It is found in the membrane. Its function is as follows. May serve to lubricate the movement of the cellulose microfibrils during cell growth and wall extension and/or may serve to maintain the fluid state of the slug cell wall. The polypeptide is Expansin-like protein 3 (expl3) (Dictyostelium discoideum (Social amoeba)).